Here is a 504-residue protein sequence, read N- to C-terminus: Cytochrome P450 4A24 (504 aa).

2 helical membrane-spanning segments follow: residues 6–26 (LASA…LLLL) and 112–132 (VVYR…NGQT). C451 provides a ligand contact to heme.

It belongs to the cytochrome P450 family. Heme is required as a cofactor.

It localises to the endoplasmic reticulum membrane. The enzyme catalyses an omega-methyl-long-chain fatty acid + reduced [NADPH--hemoprotein reductase] + O2 = an omega-hydroxy-long-chain fatty acid + oxidized [NADPH--hemoprotein reductase] + H2O + H(+). Functionally, catalyzes the omega- and (omega-1)-hydroxylation of various fatty acids such as laurate and palmitate. Has no activity toward taurochenodeoxycholic acid. This is Cytochrome P450 4A24 (CYP4A24) from Sus scrofa (Pig).